The sequence spans 526 residues: Phosphoenolpyruvate carboxylase (526 aa).

Belongs to the PEPCase type 2 family. Homotetramer. Mg(2+) serves as cofactor.

It carries out the reaction oxaloacetate + phosphate = phosphoenolpyruvate + hydrogencarbonate. Functionally, catalyzes the irreversible beta-carboxylation of phosphoenolpyruvate (PEP) to form oxaloacetate (OAA), a four-carbon dicarboxylic acid source for the tricarboxylic acid cycle. The chain is Phosphoenolpyruvate carboxylase from Methanosarcina barkeri (strain Fusaro / DSM 804).